Reading from the N-terminus, the 119-residue chain is MARFVVVALLVLLSLSGLEAIQHAPKIQVYSRHPAENGKPNFLNCYVSGFHPSDIEVDLLKNGKKIEKVEHSDLSFSKDWSFYLLYYTEFTPNEKDEYACRVSHVTLSTPKTVKWDRNM.

The signal sequence occupies residues 1–20 (MARFVVVALLVLLSLSGLEA). The 90-residue stretch at 25 to 114 (PKIQVYSRHP…VTLSTPKTVK (90 aa)) folds into the Ig-like C1-type domain. Cys-45 and Cys-100 are oxidised to a cystine.

This sequence belongs to the beta-2-microglobulin family. As to quaternary structure, heterodimer of an alpha chain and a beta chain. Beta-2-microglobulin is the beta-chain of major histocompatibility complex class I molecules.

It is found in the secreted. Functionally, component of the class I major histocompatibility complex (MHC). Involved in the presentation of peptide antigens to the immune system. In Aotus lemurinus (Gray-bellied night monkey), this protein is Beta-2-microglobulin (B2M).